The primary structure comprises 598 residues: Elongation factor 4 (598 aa).

Residues 4–186 form the tr-type G domain; it reads SHIRNFAIIA…AIVSRLPAPS (183 aa). GTP contacts are provided by residues 16–21 and 133–136; these read DHGKST and NKID.

This sequence belongs to the TRAFAC class translation factor GTPase superfamily. Classic translation factor GTPase family. LepA subfamily.

Its subcellular location is the cell inner membrane. It catalyses the reaction GTP + H2O = GDP + phosphate + H(+). In terms of biological role, required for accurate and efficient protein synthesis under certain stress conditions. May act as a fidelity factor of the translation reaction, by catalyzing a one-codon backward translocation of tRNAs on improperly translocated ribosomes. Back-translocation proceeds from a post-translocation (POST) complex to a pre-translocation (PRE) complex, thus giving elongation factor G a second chance to translocate the tRNAs correctly. Binds to ribosomes in a GTP-dependent manner. The polypeptide is Elongation factor 4 (Ehrlichia chaffeensis (strain ATCC CRL-10679 / Arkansas)).